Reading from the N-terminus, the 182-residue chain is Fimbrial subunit type 1 (182 aa).

Positions 1–23 are cleaved as a signal peptide; that stretch reads MKIKTLAIVVLSALSLSSAAALA. Cysteines 44 and 84 form a disulfide.

It belongs to the fimbrial protein family.

Its subcellular location is the fimbrium. The polypeptide is Fimbrial subunit type 1 (Klebsiella pneumoniae).